Consider the following 277-residue polypeptide: Probable endonuclease 4 (277 aa).

9 residues coordinate Zn(2+): histidine 67, histidine 107, glutamate 141, aspartate 173, histidine 176, histidine 207, aspartate 220, histidine 222, and glutamate 252.

Belongs to the AP endonuclease 2 family. Zn(2+) serves as cofactor.

It catalyses the reaction Endonucleolytic cleavage to 5'-phosphooligonucleotide end-products.. Its function is as follows. Endonuclease IV plays a role in DNA repair. It cleaves phosphodiester bonds at apurinic or apyrimidinic (AP) sites, generating a 3'-hydroxyl group and a 5'-terminal sugar phosphate. The chain is Probable endonuclease 4 from Finegoldia magna (strain ATCC 29328 / DSM 20472 / WAL 2508) (Peptostreptococcus magnus).